Consider the following 1036-residue polypeptide: Lethal(2) giant larvae protein homolog 1 (1036 aa).

10 WD repeats span residues 38 to 71, 78 to 119, 139 to 175, 199 to 233, 239 to 271, 289 to 331, 339 to 373, 395 to 473, 517 to 592, and 601 to 662; these read SALAFDPELRIMAIGTRSGAVKIYGAPGVEFTGL, VTQM…GLSF, VTVVLLAAGDTVVLGTESGSIFFLDVATLALLEGQTL, SLQGHLQDPSKILIGYSRGLLVIWSQATQSVEHVF, LESLCWGRGGSNIISSHSDGSYAIWSTDTGSPP, AINK…ETLV, VIDFFTVHSTQPEDGFDNPQALAVLLEEELVVLDL, TCSA…YKLS, QKVA…RVLI, and TAVA…LRQS. Position 662 is a phosphoserine (Ser662). Residues 670–694 are disordered; it reads RVSGKKRATTASSKLQEANAQLAEQ. Positions 678–693 are enriched in polar residues; sequence TTASSKLQEANAQLAE. WD repeat units follow at residues 722 to 782, 791 to 843, 848 to 901, and 915 to 938; these read VRCL…KEVQ, AIAV…VSAK, LTAH…VHYS, and VFTRHGQGFYLISPSEFERFSLSA. Phosphothreonine is present on Thr957. Phosphoserine is present on residues Ser964, Ser982, and Ser989. Residues 980–1002 are disordered; the sequence is PESCEGSPSSAHSKRADTMEPPE.

It belongs to the WD repeat L(2)GL family. Associated with nonmuscle myosin II heavy chain. Interacts with PRKCI/aPKC, PARD6B/Par-6 and PARD6A. Interacts with STX4A. Interacts with DCAF1. Interacts with RAB10 (GDP-bound form); the interaction is direct and promotes RAB10 association with membranes and activation through competition with the Rab inhibitor GDI1. Phosphorylated by PRKCI. As to expression, expressed at high level in the testis and at lower level in ovary, brain, spleen and kidney.

It localises to the early endosome membrane. It is found in the golgi apparatus. The protein localises to the trans-Golgi network membrane. Its subcellular location is the golgi apparatus membrane. The protein resides in the cell projection. It localises to the axon. It is found in the cytoplasm. The protein localises to the cytoskeleton. In terms of biological role, cortical cytoskeleton protein found in a complex involved in maintaining cell polarity and epithelial integrity. Involved in the regulation of mitotic spindle orientation, proliferation, differentiation and tissue organization of neuroepithelial cells. Involved in axonogenesis through RAB10 activation thereby regulating vesicular membrane trafficking toward the axonal plasma membrane. The chain is Lethal(2) giant larvae protein homolog 1 (Llgl1) from Rattus norvegicus (Rat).